The following is a 205-amino-acid chain: Protein N-terminal glutamine amidohydrolase (205 aa).

Active-site residues include C20, H74, and D90.

It belongs to the NTAQ1 family. In terms of assembly, monomer.

The enzyme catalyses N-terminal L-glutaminyl-[protein] + H2O = N-terminal L-glutamyl-[protein] + NH4(+). Its function is as follows. Mediates the side-chain deamidation of N-terminal glutamine residues to glutamate, an important step in N-end rule pathway of protein degradation. Conversion of the resulting N-terminal glutamine to glutamate renders the protein susceptible to arginylation, polyubiquitination and degradation as specified by the N-end rule. Does not act on substrates with internal or C-terminal glutamine and does not act on non-glutamine residues in any position. This Drosophila erecta (Fruit fly) protein is Protein N-terminal glutamine amidohydrolase (tun).